We begin with the raw amino-acid sequence, 346 residues long: Uroporphyrinogen decarboxylase (346 aa).

Substrate-binding positions include 26–30 (RQAGR), Asp-76, Tyr-153, Ser-208, and His-323.

Belongs to the uroporphyrinogen decarboxylase family. As to quaternary structure, homodimer.

It localises to the cytoplasm. It catalyses the reaction uroporphyrinogen III + 4 H(+) = coproporphyrinogen III + 4 CO2. It functions in the pathway porphyrin-containing compound metabolism; protoporphyrin-IX biosynthesis; coproporphyrinogen-III from 5-aminolevulinate: step 4/4. In terms of biological role, catalyzes the decarboxylation of four acetate groups of uroporphyrinogen-III to yield coproporphyrinogen-III. The polypeptide is Uroporphyrinogen decarboxylase (Prochlorococcus marinus (strain MIT 9515)).